Consider the following 247-residue polypeptide: MRILLSNDDGYFAPGIANLAKILSDIADVTVVAPERDRSGASNSLTLDRPLSLHKSHNGFYYVNGTPTDCVHLAVTGMLDELPDMVISGINDGANMGDDTVYSGTVAAATEGFLLGLPSIAVSLVSMSRGNFPTAAKIVLDLVKRFIDNKFHVPILLNVNVPDLPYEELQGIEVTRLGRRHKAEPVIKYQTPRGETVYWVGAAGAAQDASEGTDFHALQNNRVSITPLQIDLTRYDQIGYVKNWLVF.

Residues D8, D9, S39, and N91 each coordinate a divalent metal cation.

The protein belongs to the SurE nucleotidase family. A divalent metal cation serves as cofactor.

It localises to the cytoplasm. It carries out the reaction a ribonucleoside 5'-phosphate + H2O = a ribonucleoside + phosphate. Functionally, nucleotidase that shows phosphatase activity on nucleoside 5'-monophosphates. The protein is 5'-nucleotidase SurE of Nitrosomonas eutropha (strain DSM 101675 / C91 / Nm57).